Reading from the N-terminus, the 363-residue chain is MSKKNNLLVAASGTGGHIFPALAVSKEVEDEWNIHWLGIQQRLDANLIPQKYNLKTLNLKTPRKNIFLFYQYIKILMSTFQIIRILKEKKINLVFTTGGYISAPTIVASKILKIPIIIHESNVVPGMVTKYFGFLCNYVLLGFKETNSYLKNCKTIFTGTPLREQFYKFNFLPEWVPKGNGPLLIVMGGSQGAKAINQILYESLEFLIKKQFRIVHIVGESHLKTFHVKNSKNYIQKKFTNEIAALIQNCDLVISRSGAGTINELMEAEKPSILIPYPYSKNNHQEKNAMILAASGGSVLINQNNMSKEVFEETLERIFKIKSKKGKKNYEILDLMKKNMENNNKIKSKNEIKKYIDYFLKEF.

Residues 14–16 (TGG), N122, R163, S190, and Q285 contribute to the UDP-N-acetyl-alpha-D-glucosamine site.

This sequence belongs to the glycosyltransferase 28 family. MurG subfamily.

The protein localises to the cell inner membrane. The enzyme catalyses di-trans,octa-cis-undecaprenyl diphospho-N-acetyl-alpha-D-muramoyl-L-alanyl-D-glutamyl-meso-2,6-diaminopimeloyl-D-alanyl-D-alanine + UDP-N-acetyl-alpha-D-glucosamine = di-trans,octa-cis-undecaprenyl diphospho-[N-acetyl-alpha-D-glucosaminyl-(1-&gt;4)]-N-acetyl-alpha-D-muramoyl-L-alanyl-D-glutamyl-meso-2,6-diaminopimeloyl-D-alanyl-D-alanine + UDP + H(+). It functions in the pathway cell wall biogenesis; peptidoglycan biosynthesis. Its function is as follows. Cell wall formation. Catalyzes the transfer of a GlcNAc subunit on undecaprenyl-pyrophosphoryl-MurNAc-pentapeptide (lipid intermediate I) to form undecaprenyl-pyrophosphoryl-MurNAc-(pentapeptide)GlcNAc (lipid intermediate II). The sequence is that of UDP-N-acetylglucosamine--N-acetylmuramyl-(pentapeptide) pyrophosphoryl-undecaprenol N-acetylglucosamine transferase from Prochlorococcus marinus (strain AS9601).